The chain runs to 554 residues: MLO-like protein 14 (554 aa).

At 1 to 13 the chain is on the extracellular side; that stretch reads MREETEPSERTLG. Residues 14 to 34 form a helical membrane-spanning segment; it reads LTPTWSVATVLTIFVFVSLIV. Residues 35 to 63 lie on the Cytoplasmic side of the membrane; sequence ERSIHRLSNWLQKTKRKPLFAALEKMKEE. Residues 64-84 form a helical membrane-spanning segment; that stretch reads LMLLGFISLLLTATSSTIANI. At 85-158 the chain is on the extracellular side; the sequence is CVSSSFHNDR…SYEGMEQLHR (74 aa). The helical transmembrane segment at 159–179 threads the bilayer; it reads FIFIMAVTHVTYSCLTMLLAI. Residues 180 to 281 lie on the Cytoplasmic side of the membrane; the sequence is VKIHRWRIWE…MIRSMEEEFQ (102 aa). The chain crosses the membrane as a helical span at residues 282-302; sequence KIVGVSGPLWGFVVGFMLFNI. A topological domain (extracellular) is located at residue Lys-303. The chain crosses the membrane as a helical span at residues 304–324; the sequence is GSNLYFWLAIIPITLVLLVGA. Topologically, residues 325–366 are cytoplasmic; the sequence is KLQHVIATLALENASITEYASGIKLRPRDELFWFKKPELLLS. A helical membrane pass occupies residues 367–387; sequence LIHFIQFQNAFELASFFWFWW. The Extracellular portion of the chain corresponds to 388-406; that stretch reads QFGYNSCFLRNHLLVYLRL. A helical transmembrane segment spans residues 407 to 427; it reads ILGFSGQFLCSYSTLPLYALV. Residues 428–554 lie on the Cytoplasmic side of the membrane; it reads TQMGTNYKAA…SSSLPMRREC (127 aa). The segment at 441 to 462 is calmodulin-binding; that stretch reads QRVRETINGWGKATRRKRRHGL.

Belongs to the MLO family.

The protein resides in the membrane. May be involved in modulation of pathogen defense and leaf cell death. Activity seems to be regulated by Ca(2+)-dependent calmodulin binding and seems not to require heterotrimeric G proteins. The chain is MLO-like protein 14 (MLO14) from Arabidopsis thaliana (Mouse-ear cress).